Here is a 292-residue protein sequence, read N- to C-terminus: ATP synthase gamma chain (292 aa).

This sequence belongs to the ATPase gamma chain family. In terms of assembly, F-type ATPases have 2 components, CF(1) - the catalytic core - and CF(0) - the membrane proton channel. CF(1) has five subunits: alpha(3), beta(3), gamma(1), delta(1), epsilon(1). CF(0) has three main subunits: a, b and c.

It localises to the cell inner membrane. Produces ATP from ADP in the presence of a proton gradient across the membrane. The gamma chain is believed to be important in regulating ATPase activity and the flow of protons through the CF(0) complex. This Nautilia profundicola (strain ATCC BAA-1463 / DSM 18972 / AmH) protein is ATP synthase gamma chain.